The primary structure comprises 164 residues: Transcription elongation factor GreA (164 aa).

Residues tyrosine 50–valine 76 are a coiled coil.

It belongs to the GreA/GreB family.

Necessary for efficient RNA polymerase transcription elongation past template-encoded arresting sites. The arresting sites in DNA have the property of trapping a certain fraction of elongating RNA polymerases that pass through, resulting in locked ternary complexes. Cleavage of the nascent transcript by cleavage factors such as GreA or GreB allows the resumption of elongation from the new 3'terminus. GreA releases sequences of 2 to 3 nucleotides. This Mycobacterium bovis (strain ATCC BAA-935 / AF2122/97) protein is Transcription elongation factor GreA.